We begin with the raw amino-acid sequence, 255 residues long: Myogenic factor 5 (255 aa).

The region spanning 83 to 134 (DRRKAATMRERRRLKKVNQAFETLKRCTTTNPNQRLPKVEILRNAIQYIESL) is the bHLH domain. Positions 221–242 (SLPIPDSITPSPTSSTDSLPRS) are enriched in low complexity. Residues 221 to 246 (SLPIPDSITPSPTSSTDSLPRSPDAH) form a disordered region.

Efficient DNA binding requires dimerization with another bHLH protein.

It is found in the nucleus. In terms of biological role, acts as a transcriptional activator that promotes transcription of muscle-specific target genes and plays a role in muscle differentiation. Induces fibroblasts to differentiate into myoblasts. Probable sequence specific DNA-binding protein. The polypeptide is Myogenic factor 5 (myf5) (Xenopus laevis (African clawed frog)).